Here is a 332-residue protein sequence, read N- to C-terminus: Biotin synthase (332 aa).

The 231-residue stretch at 52–282 (FPENEVEFCS…KAELRLCGGR (231 aa)) folds into the Radical SAM core domain. [4Fe-4S] cluster contacts are provided by Cys70, Cys74, and Cys77. Cys114, Cys147, Cys207, and Arg277 together coordinate [2Fe-2S] cluster.

It belongs to the radical SAM superfamily. Biotin synthase family. Homodimer. [4Fe-4S] cluster is required as a cofactor. The cofactor is [2Fe-2S] cluster.

It catalyses the reaction (4R,5S)-dethiobiotin + (sulfur carrier)-SH + 2 reduced [2Fe-2S]-[ferredoxin] + 2 S-adenosyl-L-methionine = (sulfur carrier)-H + biotin + 2 5'-deoxyadenosine + 2 L-methionine + 2 oxidized [2Fe-2S]-[ferredoxin]. It functions in the pathway cofactor biosynthesis; biotin biosynthesis; biotin from 7,8-diaminononanoate: step 2/2. In terms of biological role, catalyzes the conversion of dethiobiotin (DTB) to biotin by the insertion of a sulfur atom into dethiobiotin via a radical-based mechanism. The protein is Biotin synthase of Aquifex aeolicus (strain VF5).